The following is a 122-amino-acid chain: Urocortin (122 aa).

The signal sequence occupies residues 1 to 25; sequence MIQRGRATLLVALLLLAQLRPESSQ. Residues 26-80 constitute a propeptide that is removed on maturation; that stretch reads WSPAAAAATGVQDPNLRWSPGVRNQGGGVRALLLLLAERFPRRAGSEPAGERQRR. The residue at position 120 (Val120) is a Valine amide.

It belongs to the sauvagine/corticotropin-releasing factor/urotensin I family. As to quaternary structure, interacts with CRHR1 and CRHR2 (via their N-terminal extracellular domain). In terms of tissue distribution, in the organ of Corti, detected in the inner hair cell region (at protein level). Expressed in skin (at protein level).

The protein resides in the secreted. Functionally, acts in vitro to stimulate the secretion of adrenocorticotropic hormone (ACTH). Binds with high affinity to CRF receptor types 1, 2-alpha, and 2-beta. Plays a role in the establishment of normal hearing thresholds. Reduces food intake and regulates ghrelin levels in gastric body and plasma. This chain is Urocortin (Ucn), found in Mus musculus (Mouse).